We begin with the raw amino-acid sequence, 483 residues long: Protein LMBR1L (483 aa).

The Extracellular segment spans residues 1–21 (MEVNQDVSVREQIFHDWVREC). A helical transmembrane segment spans residues 22-42 (IICSLLFSTLYLLSYIVITKF). The Cytoplasmic segment spans residues 43-60 (KKHADFATVDVEDAAVNR). The chain crosses the membrane as a helical span at residues 61 to 81 (IALWMCTFTLAVSVGAVLLLP). Residues 82–112 (FSIISNEVLLSVPHNYYIQWLNGSLIHGLWN) are Extracellular-facing. The chain crosses the membrane as a helical span at residues 113–133 (LVFLFSNLSLVFLMPFAYLFT). The Cytoplasmic segment spans residues 134–153 (EAEGFAGSKKGVMSRVYETT). Residues 154–174 (VVLLLLTLLVFGIVWVASAIF) form a helical membrane-spanning segment. Over 175–194 (DDDSAGRESLYDLWEYYLPY) the chain is Extracellular. A helical membrane pass occupies residues 195–215 (LYSGISLFGVLLLLLCTPFGL). The Cytoplasmic portion of the chain corresponds to 216–294 (SRMFSVTGNL…RRRASPWQRN (79 aa)). A helical transmembrane segment spans residues 295–315 (LVYPLAMLLLLALTGITVLIV). Topologically, residues 316–342 (CVNVLELLIDEAAMPKGIQGSQLGKVS) are extracellular. The helical transmembrane segment at 343–363 (FSVFGSFGAAVQVILIFYLMA) threads the bilayer. Residues 364-386 (SSVVGFYSSPLFIQLLPQKQNTP) lie on the Cytoplasmic side of the membrane. The helical transmembrane segment at 387–407 (MTKIIGNCVSLLILSSALPVF) threads the bilayer. Residues 408–429 (SRTLGITRFDLLGDFGRFNWLG) are Extracellular-facing. Residues 430–450 (NFYLILLYNMMFAGLATLCLV) traverse the membrane as a helical segment. Over 451–483 (KKFTWAVQAELIRAFGLDRLPLSVKKIRSQGKA) the chain is Cytoplasmic.

The protein belongs to the LIMR family. As to quaternary structure, dimer. Can also form higher oligomers.

It is found in the cell membrane. The protein resides in the endoplasmic reticulum membrane. May play a role in lymphocyte development by negatively regulating the canonical Wnt signaling pathway. May act as a LCN1 receptor. This chain is Protein LMBR1L (lmbr1l), found in Xenopus laevis (African clawed frog).